Reading from the N-terminus, the 141-residue chain is Protein X (141 aa).

The disordered stretch occupies residues 22–52 (GPQSSGPPFPRPAAGSAASSASSPSPSDESD). Positions 33–48 (PAAGSAASSASSPSPS) are enriched in low complexity. The interval 68–113 (PCCLVFTCADLRTMDSTVNFVSWHAKRQLGMPSKDLWTPYIKDQLL) is mitochondrial targeting sequence.

It belongs to the orthohepadnavirus protein X family. As to quaternary structure, may form homodimer. May interact with host CEBPA, CFLAR, CREB1, DDB1, E4F1, HBXIP, HSPD1/HSP60, NFKBIA, POLR2E and SMAD4. Interacts with host SMC5-SMC6 complex and induces its degradation. Interacts with host TRPC4AP; leading to prevent ubiquitination of TRPC4AP. Interacts with host PLSCR1; this interaction promotes ubiquitination and degradation of HBx and impairs HBx-mediated cell proliferation. Post-translationally, a fraction may be phosphorylated in insect cells and HepG2 cells, a human hepatoblastoma cell line. Phosphorylated in vitro by host protein kinase C or mitogen-activated protein kinase. N-acetylated in insect cells.

The protein localises to the host cytoplasm. It localises to the host nucleus. Its subcellular location is the host mitochondrion. Its function is as follows. Multifunctional protein that plays a role in silencing host antiviral defenses and promoting viral transcription. Does not seem to be essential for HBV infection. May be directly involved in development of cirrhosis and liver cancer (hepatocellular carcinoma). Most of cytosolic activities involve modulation of cytosolic calcium. The effect on apoptosis is controversial depending on the cell types in which the studies have been conducted. May induce apoptosis by localizing in mitochondria and causing loss of mitochondrial membrane potential. May also modulate apoptosis by binding host CFLAR, a key regulator of the death-inducing signaling complex (DISC). Promotes viral transcription by using the host E3 ubiquitin ligase DDB1 to target the SMC5-SMC6 complex to proteasomal degradation. This host complex would otherwise bind to viral episomal DNA, and prevents its transcription. Moderately stimulates transcription of many different viral and cellular transcription elements. Promoters and enhancers stimulated by HBx contain DNA binding sites for NF-kappa-B, AP-1, AP-2, c-EBP, ATF/CREB, or the calcium-activated factor NF-AT. The protein is Protein X of Woodchuck hepatitis B virus (isolate w64/pWS23) (WHV).